The sequence spans 951 residues: Cation channel sperm-associated auxiliary subunit epsilon (951 aa).

Residues 1–19 (MSAREVAVLLLWLSCYGSA) form the signal peptide. The Extracellular portion of the chain corresponds to 20–903 (LWRYSTNSPN…ETFGLIPSPS (884 aa)). 4 cysteine pairs are disulfide-bonded: C57–C71, C101–C206, C246–C336, and C410–C413. N-linked (GlcNAc...) asparagine glycans are attached at residues N61 and N114. Residues N414, N472, N487, N493, and N535 are each glycosylated (N-linked (GlcNAc...) asparagine). Cystine bridges form between C583–C690, C703–C885, C719–C752, and C804–C835. The N-linked (GlcNAc...) asparagine glycan is linked to N796. N854, N881, and N886 each carry an N-linked (GlcNAc...) asparagine glycan. The helical transmembrane segment at 904–924 (VYLVASFLFVLMLLFFTILVL) threads the bilayer. Topologically, residues 925-951 (SYFRYMRIYRRYIYEPLHKPQRKRKKN) are cytoplasmic.

It belongs to the CATSPERD family. As to quaternary structure, component of the CatSper complex or CatSpermasome composed of the core pore-forming members CATSPER1, CATSPER2, CATSPER3 and CATSPER4 as well as auxiliary members CATSPERB, CATSPERG, CATSPERD, CATSPERE, CATSPERZ, C2CD6/CATSPERT, TMEM249, TMEM262 and EFCAB9. HSPA1 may be an additional auxiliary complex member. The core complex members CATSPER1, CATSPER2, CATSPER3 and CATSPER4 form a heterotetrameric channel. The auxiliary CATSPERB, CATSPERG, CATSPERD and CATSPERE subunits form a pavilion-like structure over the pore which stabilizes the complex through interactions with CATSPER4, CATSPER3, CATSPER1 and CATSPER2 respectively. TMEM262/CATSPERH interacts with CATSPERB, further stabilizing the complex. C2CD6/CATSPERT interacts at least with CATSPERD and is required for targeting the CatSper complex in the flagellar membrane.

It is found in the cell projection. Its subcellular location is the cilium. It localises to the flagellum membrane. Auxiliary component of the CatSper complex, a complex involved in sperm cell hyperactivation. Sperm cell hyperactivation is needed for sperm motility which is essential late in the preparation of sperm for fertilization. This Homo sapiens (Human) protein is Cation channel sperm-associated auxiliary subunit epsilon.